The chain runs to 378 residues: Lipoyl synthase, mitochondrial (378 aa).

Positions 97, 102, 108, 128, 132, 135, and 343 each coordinate [4Fe-4S] cluster. A Radical SAM core domain is found at 111–332 (GSDKSAATAT…RQRALDMGFL (222 aa)).

The protein belongs to the radical SAM superfamily. Lipoyl synthase family. [4Fe-4S] cluster is required as a cofactor.

Its subcellular location is the mitochondrion. The enzyme catalyses [[Fe-S] cluster scaffold protein carrying a second [4Fe-4S](2+) cluster] + N(6)-octanoyl-L-lysyl-[protein] + 2 oxidized [2Fe-2S]-[ferredoxin] + 2 S-adenosyl-L-methionine + 4 H(+) = [[Fe-S] cluster scaffold protein] + N(6)-[(R)-dihydrolipoyl]-L-lysyl-[protein] + 4 Fe(3+) + 2 hydrogen sulfide + 2 5'-deoxyadenosine + 2 L-methionine + 2 reduced [2Fe-2S]-[ferredoxin]. It participates in protein modification; protein lipoylation via endogenous pathway; protein N(6)-(lipoyl)lysine from octanoyl-[acyl-carrier-protein]: step 2/2. In terms of biological role, catalyzes the radical-mediated insertion of two sulfur atoms into the C-6 and C-8 positions of the octanoyl moiety bound to the lipoyl domains of lipoate-dependent enzymes, thereby converting the octanoylated domains into lipoylated derivatives. The sequence is that of Lipoyl synthase, mitochondrial from Phaeosphaeria nodorum (strain SN15 / ATCC MYA-4574 / FGSC 10173) (Glume blotch fungus).